Consider the following 200-residue polypeptide: MSGFASQIPSMALLGSGLTGEVGLRVLFSPLSSNIVLRTACCSIGIGLPVYSTFKAIESGDENEQQKMLIYWAAYGSFSLVEVFTDKIISWFPLYYHVKFAFLVWLQLPTVEGSKQIYNNQIRPFLLRHQARVDQLVDGVYGEMVKVVRSHQGEIRFVRAMIAKILGSVNEDAPRLGEIANGSPVSETNSDSESDSNHED.

The tract at residues 176–200 (LGEIANGSPVSETNSDSESDSNHED) is disordered.

This sequence belongs to the DP1 family.

In Arabidopsis thaliana (Mouse-ear cress), this protein is HVA22-like protein k (HVA22K).